A 408-amino-acid polypeptide reads, in one-letter code: Dual-specificity RNA methyltransferase RlmN (408 aa).

Catalysis depends on Glu-93, which acts as the Proton acceptor. The Radical SAM core domain occupies Glu-99 to Asp-379. Cysteines 106 and 384 form a disulfide. Residues Cys-113, Cys-117, and Cys-120 each contribute to the [4Fe-4S] cluster site. Residues Ser-152–His-196 form a disordered region. Residues Lys-157–Asp-178 are compositionally biased toward basic and acidic residues. S-adenosyl-L-methionine-binding positions include Gly-210–Glu-211, Ser-242, Ser-264–His-266, and Asn-341. The S-methylcysteine intermediate role is filled by Cys-384.

It belongs to the radical SAM superfamily. RlmN family. Requires [4Fe-4S] cluster as cofactor.

The protein localises to the cytoplasm. The enzyme catalyses adenosine(2503) in 23S rRNA + 2 reduced [2Fe-2S]-[ferredoxin] + 2 S-adenosyl-L-methionine = 2-methyladenosine(2503) in 23S rRNA + 5'-deoxyadenosine + L-methionine + 2 oxidized [2Fe-2S]-[ferredoxin] + S-adenosyl-L-homocysteine. The catalysed reaction is adenosine(37) in tRNA + 2 reduced [2Fe-2S]-[ferredoxin] + 2 S-adenosyl-L-methionine = 2-methyladenosine(37) in tRNA + 5'-deoxyadenosine + L-methionine + 2 oxidized [2Fe-2S]-[ferredoxin] + S-adenosyl-L-homocysteine. In terms of biological role, specifically methylates position 2 of adenine 2503 in 23S rRNA and position 2 of adenine 37 in tRNAs. m2A2503 modification seems to play a crucial role in the proofreading step occurring at the peptidyl transferase center and thus would serve to optimize ribosomal fidelity. This is Dual-specificity RNA methyltransferase RlmN from Aromatoleum aromaticum (strain DSM 19018 / LMG 30748 / EbN1) (Azoarcus sp. (strain EbN1)).